The primary structure comprises 121 residues: Acid shock protein (121 aa).

Residues 1–21 form the signal peptide; the sequence is MKKVLALMVAATLGLSSVAFA. A propeptide spanning residues 22–63 is cleaved from the precursor; that stretch reads ADTTATATPAATSTTATVAAQTKATQHQKHKVTKKTTEQKAQ. Positions 40-121 are disordered; the sequence is AAQTKATQHQ…AKKPVAAPAA (82 aa). Low complexity predominate over residues 74–83; that stretch reads VQKAPVQKAQ. Over residues 84 to 93 the composition is skewed to basic residues; sequence AAKKHVKKAS. Positions 94–103 are enriched in low complexity; it reads VQKAPVQKAQ. Residues 104–113 show a composition bias toward basic residues; sequence AAKKHHKTAK.

Belongs to the Asr family. Post-translationally, proteolytic processing gives rise to the active protein.

It localises to the periplasm. Required for growth and/or survival at acidic conditions. This Yersinia pseudotuberculosis serotype O:1b (strain IP 31758) protein is Acid shock protein.